The primary structure comprises 297 residues: Transmembrane protein 169 (297 aa).

A disordered region spans residues 1–85 (MEEPTAVEGQ…KEEEGDDFLD (85 aa)). Over 1–159 (MEEPTAVEGQ…CQMGADRGPH (159 aa)) the chain is Extracellular. A compositionally biased stretch (acidic residues) spans 61–85 (KTDEEPGESEGGDQPKEEEGDDFLD). A helical transmembrane segment spans residues 160 to 180 (VVLWTLICLPVVFILSFVVSF). Over 181–210 (YYGTITWYNIFLVYNEERTFWHKISYCPCL) the chain is Cytoplasmic. A helical membrane pass occupies residues 211-231 (VLFYPVLIMAMASSLGLYAAV). Residues 232-297 (VQLSWSWEAW…PIQEVETSTV (66 aa)) are Extracellular-facing.

Its subcellular location is the membrane. This chain is Transmembrane protein 169 (TMEM169), found in Homo sapiens (Human).